The chain runs to 1574 residues: Myosin-2 (1574 aa).

Residue Ser-2 is modified to N-acetylserine. The 54-residue stretch at 4–57 folds into the Myosin N-terminal SH3-like domain; sequence EVGTRCWYPHKELGWIGAEVIKNEFNDGKYHLELQLEDDEIVSVDTKDLNNDKD. The Myosin motor domain occupies 70–781; that stretch reads EATEDLTSLS…MLAYLEKLRS (712 aa). 164-171 lines the ATP pocket; it reads GESGAGKT. Positions 443-523 are actin-binding; it reads FIGVLDIYGF…LGILSLLDEE (81 aa). IQ domains lie at 784–806, 807–831, 832–855, 856–879, 880–902, and 903–932; these read MHNS…QYLQ, ISQA…NDEM, KVNC…VFSV, LRTI…KQEH, EYNA…RFLR, and TKKD…DAKS. Residues 933-1088 are a coiled coil; it reads VNHLKEVSYK…RLQTAMSLGT (156 aa). Positions 1087–1574 are non alpha-helical, tail domain; that stretch reads GTVTTSVLPQ…VAQQVVQDGH (488 aa). Phosphothreonine is present on Thr-1097. Ser-1121 is modified (phosphoserine). The Dilute domain maps to 1226-1501; sequence AQVLTTIQKV…LRYVADIVKK (276 aa).

This sequence belongs to the TRAFAC class myosin-kinesin ATPase superfamily. Myosin family. As to quaternary structure, homodimer. Interacts with calmodulin (CMD1) and the myosin light chain MLC1 through its IQ repeats. Binds to the membrane receptors SEC4 and VAC17 to transport secretory vesicles and the vacuole, respectively. Binds to KAR9, which transports BIM1-coated cytoplasmic microtubules that are attached to the spindle pole body into the emerging bud, thereby correctly orienting the mitotic spindle. Interacts with YPT11 and MMR1 to accelerate mitochondrial distribution to the bud. Interacts with SHE4 and localizes it to the bud tip. Interacts with RHO3 and SMY1, putative regulators of MYO2 function. Interacts with SRO7.

It is found in the bud neck. The protein resides in the bud tip. Myosin heavy chain that is required for the cell cycle-regulated transport of various organelles and proteins for their segregation. Functions by binding with its tail domain to receptor proteins on organelles and exerting force with its N-terminal motor domain against actin filaments, thereby transporting its cargo along polarized actin cables. Essential for the delivery of secretory vesicles to sites of active growth during bud emergence and cytokinesis. Required for segregation and inheritance of peroxisomes, late Golgi compartments, mitochondria and the vacuole to the daughter cell during cell division. Also required for correct alignment of the spindle during mitosis. The sequence is that of Myosin-2 (MYO2) from Saccharomyces cerevisiae (strain ATCC 204508 / S288c) (Baker's yeast).